We begin with the raw amino-acid sequence, 313 residues long: Aspartate carbamoyltransferase catalytic subunit (313 aa).

Positions 53 and 54 each coordinate carbamoyl phosphate. Lys82 contacts L-aspartate. Positions 103, 131, and 134 each coordinate carbamoyl phosphate. The L-aspartate site is built by Arg163 and Arg224. Positions 263 and 264 each coordinate carbamoyl phosphate.

Belongs to the aspartate/ornithine carbamoyltransferase superfamily. ATCase family. Heterooligomer of catalytic and regulatory chains.

It carries out the reaction carbamoyl phosphate + L-aspartate = N-carbamoyl-L-aspartate + phosphate + H(+). The protein operates within pyrimidine metabolism; UMP biosynthesis via de novo pathway; (S)-dihydroorotate from bicarbonate: step 2/3. In terms of biological role, catalyzes the condensation of carbamoyl phosphate and aspartate to form carbamoyl aspartate and inorganic phosphate, the committed step in the de novo pyrimidine nucleotide biosynthesis pathway. The polypeptide is Aspartate carbamoyltransferase catalytic subunit (Halorubrum lacusprofundi (strain ATCC 49239 / DSM 5036 / JCM 8891 / ACAM 34)).